A 575-amino-acid polypeptide reads, in one-letter code: Phosphoenolpyruvate-protein phosphotransferase (575 aa).

His-191 serves as the catalytic Tele-phosphohistidine intermediate. Residues Arg-298 and Arg-334 each contribute to the phosphoenolpyruvate site. Positions 435 and 459 each coordinate Mg(2+). Residues 458–459 and Arg-469 each bind phosphoenolpyruvate; that span reads ND. Cys-506 acts as the Proton donor in catalysis.

It belongs to the PEP-utilizing enzyme family. As to quaternary structure, homodimer. Requires Mg(2+) as cofactor.

It localises to the cytoplasm. The enzyme catalyses L-histidyl-[protein] + phosphoenolpyruvate = N(pros)-phospho-L-histidyl-[protein] + pyruvate. General (non sugar-specific) component of the phosphoenolpyruvate-dependent sugar phosphotransferase system (sugar PTS). This major carbohydrate active-transport system catalyzes the phosphorylation of incoming sugar substrates concomitantly with their translocation across the cell membrane. Enzyme I transfers the phosphoryl group from phosphoenolpyruvate (PEP) to the phosphoryl carrier protein (HPr). The chain is Phosphoenolpyruvate-protein phosphotransferase (ptsI) from Enterococcus faecalis (strain ATCC 700802 / V583).